An 84-amino-acid chain; its full sequence is Beta-defensin 119 (84 aa).

A signal peptide spans 1 to 21 (MKLLYLFLAILLAIEEPVISG). 3 disulfides stabilise this stretch: Cys28–Cys55, Cys35–Cys49, and Cys39–Cys56.

It belongs to the beta-defensin family.

The protein resides in the secreted. Functionally, has antibacterial activity. The polypeptide is Beta-defensin 119 (DEFB119) (Gorilla gorilla gorilla (Western lowland gorilla)).